We begin with the raw amino-acid sequence, 333 residues long: GTP 3',8-cyclase (333 aa).

In terms of domain architecture, Radical SAM core spans 7–221 (KFGRVHDYIR…FEACDAIGFE (215 aa)). A GTP-binding site is contributed by arginine 16. Residues cysteine 23 and cysteine 27 each coordinate [4Fe-4S] cluster. An S-adenosyl-L-methionine-binding site is contributed by tyrosine 29. A [4Fe-4S] cluster-binding site is contributed by cysteine 30. Arginine 66 contacts GTP. Glycine 70 serves as a coordination point for S-adenosyl-L-methionine. Threonine 97 serves as a coordination point for GTP. Position 121 (serine 121) interacts with S-adenosyl-L-methionine. A GTP-binding site is contributed by lysine 158. Methionine 192 lines the S-adenosyl-L-methionine pocket. Positions 257 and 260 each coordinate [4Fe-4S] cluster. Residue 262 to 264 (RLR) coordinates GTP. Cysteine 274 is a binding site for [4Fe-4S] cluster.

The protein belongs to the radical SAM superfamily. MoaA family. Monomer and homodimer. The cofactor is [4Fe-4S] cluster.

The enzyme catalyses GTP + AH2 + S-adenosyl-L-methionine = (8S)-3',8-cyclo-7,8-dihydroguanosine 5'-triphosphate + 5'-deoxyadenosine + L-methionine + A + H(+). The protein operates within cofactor biosynthesis; molybdopterin biosynthesis. In terms of biological role, catalyzes the cyclization of GTP to (8S)-3',8-cyclo-7,8-dihydroguanosine 5'-triphosphate. The sequence is that of GTP 3',8-cyclase from Listeria welshimeri serovar 6b (strain ATCC 35897 / DSM 20650 / CCUG 15529 / CIP 8149 / NCTC 11857 / SLCC 5334 / V8).